A 67-amino-acid chain; its full sequence is Large ribosomal subunit protein uL29 (67 aa).

The protein belongs to the universal ribosomal protein uL29 family.

The polypeptide is Large ribosomal subunit protein uL29 (Heliobacterium modesticaldum (strain ATCC 51547 / Ice1)).